A 621-amino-acid chain; its full sequence is Very-long-chain aldehyde decarbonylase GL1-5 (621 aa).

A run of 5 helical transmembrane segments spans residues 99–119, 126–146, 186–206, 224–244, and 332–352; these read IILS…GQHL, GAGL…YWFH, LLFS…IIAF, FELV…LMYT, and MWPL…SFTV. In terms of domain architecture, Fatty acid hydroxylase spans 138-272; sequence VEFLYYWFHR…MPFYDYIYNT (135 aa).

This sequence belongs to the sterol desaturase family. As to quaternary structure, homodimer. As to expression, expressed in panicles, developing spikelets, stamens and hulls and, at low levels, in roots, developing seeds, flag leaves and seedling shoots. Strongly expressed in the epidermal cells of anthers.

The protein localises to the endoplasmic reticulum membrane. It catalyses the reaction a long-chain fatty aldehyde + 2 NADPH + O2 + H(+) = a long-chain alkane + formate + 2 NADP(+) + H2O. Functionally, aldehyde decarbonylase involved in the conversion of aldehydes to alkanes. Core component of a very-long-chain alkane synthesis complex. Required for the biosynthesis of very-long-chain fatty acids (including polyesters) in cuticles, anther tapetum and pollen exine. This chain is Very-long-chain aldehyde decarbonylase GL1-5, found in Oryza sativa subsp. japonica (Rice).